The following is a 317-amino-acid chain: Transaldolase (317 aa).

Residue Lys-126 is the Schiff-base intermediate with substrate of the active site.

The protein belongs to the transaldolase family. Type 1 subfamily. Homodimer.

It is found in the cytoplasm. It catalyses the reaction D-sedoheptulose 7-phosphate + D-glyceraldehyde 3-phosphate = D-erythrose 4-phosphate + beta-D-fructose 6-phosphate. The protein operates within carbohydrate degradation; pentose phosphate pathway; D-glyceraldehyde 3-phosphate and beta-D-fructose 6-phosphate from D-ribose 5-phosphate and D-xylulose 5-phosphate (non-oxidative stage): step 2/3. Functionally, transaldolase is important for the balance of metabolites in the pentose-phosphate pathway. The sequence is that of Transaldolase from Paraburkholderia phytofirmans (strain DSM 17436 / LMG 22146 / PsJN) (Burkholderia phytofirmans).